A 228-amino-acid chain; its full sequence is UPF0758 protein CLI_3057 (228 aa).

The 123-residue stretch at 106–228 (KINTPLDVSN…YVSMKEKGTI (123 aa)) folds into the MPN domain. 3 residues coordinate Zn(2+): histidine 177, histidine 179, and aspartate 190. The JAMM motif motif lies at 177 to 190 (HNHPSGDPTPSKED).

It belongs to the UPF0758 family.

In Clostridium botulinum (strain Langeland / NCTC 10281 / Type F), this protein is UPF0758 protein CLI_3057.